Reading from the N-terminus, the 70-residue chain is Translational regulator CsrA (70 aa).

This sequence belongs to the CsrA/RsmA family. As to quaternary structure, homodimer; the beta-strands of each monomer intercalate to form a hydrophobic core, while the alpha-helices form wings that extend away from the core.

It is found in the cytoplasm. Its function is as follows. A translational regulator that binds mRNA to regulate translation initiation and/or mRNA stability. Usually binds in the 5'-UTR at or near the Shine-Dalgarno sequence preventing ribosome-binding, thus repressing translation. Its main target seems to be the major flagellin gene, while its function is anatagonized by FliW. The protein is Translational regulator CsrA of Clostridioides difficile (strain 630) (Peptoclostridium difficile).